We begin with the raw amino-acid sequence, 267 residues long: tRNA (guanine-N(1)-)-methyltransferase (267 aa).

Residues G112 and 131–136 (IGDYIL) contribute to the S-adenosyl-L-methionine site. Residues 245-259 (DRRKEKNSYEDEFNR) are compositionally biased toward basic and acidic residues. The interval 245 to 267 (DRRKEKNSYEDEFNRRNYKRSTS) is disordered.

Belongs to the RNA methyltransferase TrmD family. Homodimer.

The protein localises to the cytoplasm. The catalysed reaction is guanosine(37) in tRNA + S-adenosyl-L-methionine = N(1)-methylguanosine(37) in tRNA + S-adenosyl-L-homocysteine + H(+). Functionally, specifically methylates guanosine-37 in various tRNAs. This chain is tRNA (guanine-N(1)-)-methyltransferase, found in Spiroplasma kunkelii.